A 172-amino-acid chain; its full sequence is NADH-ubiquinone oxidoreductase chain 6 (172 aa).

5 helical membrane-spanning segments follow: residues methionine 1–serine 21, alanine 24–valine 44, leucine 53–leucine 73, valine 86–leucine 106, and glycine 140–valine 160.

The protein belongs to the complex I subunit 6 family. Core subunit of respiratory chain NADH dehydrogenase (Complex I) which is composed of 45 different subunits.

The protein localises to the mitochondrion inner membrane. The enzyme catalyses a ubiquinone + NADH + 5 H(+)(in) = a ubiquinol + NAD(+) + 4 H(+)(out). In terms of biological role, core subunit of the mitochondrial membrane respiratory chain NADH dehydrogenase (Complex I) which catalyzes electron transfer from NADH through the respiratory chain, using ubiquinone as an electron acceptor. Essential for the catalytic activity and assembly of complex I. This Danio rerio (Zebrafish) protein is NADH-ubiquinone oxidoreductase chain 6 (mt-nd6).